The sequence spans 553 residues: 5'-nucleotidase (553 aa).

Positions 1–21 are cleaved as a signal peptide; it reads MKQRLIVKTALSAAILATLAG. A lipid anchor (N-palmitoyl cysteine) is attached at Cys-22. Cys-22 is lipidated: S-diacylglycerol cysteine. A divalent metal cation is bound by residues Asp-45, His-47, Asp-88, Asn-120, His-221, His-256, and Gln-258. Substrate contacts are provided by residues Phe-432 and 501-507; that span reads YNAAGGD.

The protein belongs to the 5'-nucleotidase family. The cofactor is chloride. Requires Mg(2+) as cofactor.

It localises to the cell outer membrane. It catalyses the reaction a ribonucleoside 5'-phosphate + H2O = a ribonucleoside + phosphate. Its function is as follows. Degradation of extracellular 5'-nucleotides for nutritional needs. This Vibrio vulnificus (strain CMCP6) protein is 5'-nucleotidase (nutA).